Consider the following 325-residue polypeptide: uncharacterized protein (325 aa).

The active-site Proton donor is the Tyr-59. His-117 is a substrate binding site.

It belongs to the aldo/keto reductase family.

The protein localises to the cytoplasm. Its subcellular location is the nucleus. This is an uncharacterized protein from Schizosaccharomyces pombe (strain 972 / ATCC 24843) (Fission yeast).